Reading from the N-terminus, the 438-residue chain is uncharacterized protein (438 aa).

A signal peptide spans 1 to 20 (MNTRLALVLCAVGSGVLSFS). C21 carries the N-palmitoyl cysteine lipid modification. C21 carries the S-diacylglycerol cysteine lipid modification.

The protein resides in the cell membrane. This is an uncharacterized protein from Treponema pallidum (strain Nichols).